The sequence spans 330 residues: Type II methyltransferase M.HaeIII (330 aa).

The region spanning 1–327 is the SAM-dependent MTase C5-type domain; sequence MNLISLFSGA…KTIKSALEIC (327 aa). ATP contacts are provided by residues Glu-29 and 50–51; that span reads DI. Residue Cys-71 is part of the active site. Residue Asn-260 participates in ATP binding.

It belongs to the class I-like SAM-binding methyltransferase superfamily. C5-methyltransferase family. In terms of assembly, monomer.

It catalyses the reaction a 2'-deoxycytidine in DNA + S-adenosyl-L-methionine = a 5-methyl-2'-deoxycytidine in DNA + S-adenosyl-L-homocysteine + H(+). A methylase, recognizes the double-stranded sequence 5'-GGCC-3', methylates C-3 on both strands, and protects the DNA from cleavage by the HaeIII endonuclease. This chain is Type II methyltransferase M.HaeIII (haeIIIM), found in Haemophilus aegyptius.